A 199-amino-acid polypeptide reads, in one-letter code: Holliday junction branch migration complex subunit RuvA (199 aa).

The interval 1–64 (MIALLTGKLA…EDAINLYGFR (64 aa)) is domain I. The segment at 65 to 143 (TMEEKEMFQL…KLGHGPLQQD (79 aa)) is domain II. Positions 144 to 148 (VAPAD) are flexible linker. Residues 149 to 199 (AHNDMRDDVVSALVNLGYKEAVVQKTVDEIGVAADATVESLLKQALKKLMK) form a domain III region.

This sequence belongs to the RuvA family. As to quaternary structure, homotetramer. Forms an RuvA(8)-RuvB(12)-Holliday junction (HJ) complex. HJ DNA is sandwiched between 2 RuvA tetramers; dsDNA enters through RuvA and exits via RuvB. An RuvB hexamer assembles on each DNA strand where it exits the tetramer. Each RuvB hexamer is contacted by two RuvA subunits (via domain III) on 2 adjacent RuvB subunits; this complex drives branch migration. In the full resolvosome a probable DNA-RuvA(4)-RuvB(12)-RuvC(2) complex forms which resolves the HJ.

Its subcellular location is the cytoplasm. Functionally, the RuvA-RuvB-RuvC complex processes Holliday junction (HJ) DNA during genetic recombination and DNA repair, while the RuvA-RuvB complex plays an important role in the rescue of blocked DNA replication forks via replication fork reversal (RFR). RuvA specifically binds to HJ cruciform DNA, conferring on it an open structure. The RuvB hexamer acts as an ATP-dependent pump, pulling dsDNA into and through the RuvAB complex. HJ branch migration allows RuvC to scan DNA until it finds its consensus sequence, where it cleaves and resolves the cruciform DNA. The polypeptide is Holliday junction branch migration complex subunit RuvA (Geotalea daltonii (strain DSM 22248 / JCM 15807 / FRC-32) (Geobacter daltonii)).